Reading from the N-terminus, the 685-residue chain is Amino acid transporter heavy chain SLC3A1 (685 aa).

A compositionally biased stretch (basic and acidic residues) spans 1–10 (MDEDKGKRDP). The disordered stretch occupies residues 1-53 (MDEDKGKRDPIQMSLKGCRTNNGFVQNEDIPEQDPDPGSRDTPQPNAVSIPAP). Residues 1–88 (MDEDKGKRDP…ARYRVPREIL (88 aa)) are Cytoplasmic-facing. The chain crosses the membrane as a helical; Signal-anchor for type II membrane protein span at residues 89–109 (FWLTVVSVFLLIGATIAIIVI). At 110–685 (SPKCLDWWQA…SALDILYSSC (576 aa)) the chain is on the extracellular side. Residue asparagine 213 coordinates Ca(2+). 3 N-linked (GlcNAc...) asparagine glycosylation sites follow: asparagine 213, asparagine 240, and asparagine 260. A disulfide bridge links cysteine 241 with cysteine 272. Residues aspartate 283, phenylalanine 317, leucine 318, and glutamate 320 each contribute to the Ca(2+) site. Asparagine 331 is a glycosylation site (N-linked (GlcNAc...) asparagine). Serine 385 bears the Phosphoserine mark. Asparagine 512 and asparagine 522 each carry an N-linked (GlcNAc...) asparagine glycan. 2 cysteine pairs are disulfide-bonded: cysteine 570–cysteine 666 and cysteine 673–cysteine 685.

As to quaternary structure, disulfide-linked heterodimer composed of the catalytic light subunit SLC7A9 and the heavy subunit SLC3A1. The heterodimer is the minimal functional unit. Assembles in non-covalently linked heterotetramers (dimers of heterodimers) and higher order oligomers; the oligomerization is mediated by SLC3A1 likely to prevent degradation in the endoplasmic reticulum and facilitate heteromer trafficking to the plasma membrane. Disulfide-linked heterodimer composed of the catalytic light subunit SLC7A13 and the heavy subunit SLC3A1. As to expression, expressed in the brush border membrane in the kidney (at protein level). Highly expressed in renal tubules in the outer stripe of the outer medulla and medullary ray (at protein level). Also detected in the renal cortex. More abundant in male than female kidneys.

It is found in the cell membrane. The protein resides in the apical cell membrane. Its function is as follows. Acts as a chaperone that facilitates biogenesis and trafficking of functional transporter heteromers to the plasma membrane. Associates with SLC7A9 to form a functional transporter complex that mediates the electrogenic exchange between cationic amino acids and neutral amino acids, with a stoichiometry of 1:1. SLC7A9-SLC3A1 transporter has system b(0,+)-like activity with high affinity for extracellular cationic amino acids and L-cystine and lower affinity for intracellular neutral amino acids. Substrate exchange is driven by high concentration of intracellular neutral amino acids and the intracellular reduction of L-cystine to L-cysteine. SLC7A9-SLC3A1 acts as a major transporter for reabsorption of L-cystine and dibasic amino acids across the brush border membrane in early proximal tubules. Associates with SLC7A13 to form a functional complex that transports anionic and neutral amino acids via exchange or facilitated diffusion. SLC7A13-SLC3A1 may act as a major transporter for L-cystine in late proximal tubules, ensuring its reabsorption from the luminal fluid in exchange for cytosolic L-glutamate or L-aspartate. The polypeptide is Amino acid transporter heavy chain SLC3A1 (Mus musculus (Mouse)).